A 376-amino-acid polypeptide reads, in one-letter code: 12-oxophytodienoate reductase 1 (376 aa).

Residues Pro-35–Thr-37, Ala-68, and Gln-110 each bind FMN. Substrate contacts are provided by residues Ser-143 and His-187–His-190. Catalysis depends on Tyr-192, which acts as the Proton donor. Arg-239 serves as a coordination point for FMN. Arg-279 is a binding site for substrate. FMN-binding positions include Gly-309 and Gly-330–Arg-331.

Belongs to the NADH:flavin oxidoreductase/NADH oxidase family. It depends on FMN as a cofactor. As to expression, constitutively expressed in roots, leaves, cotyledons, cells culture and to a lower extent in flowers.

The protein resides in the cytoplasm. The enzyme catalyses (1S,2S)-OPC-8 + NADP(+) = (9S,13S,15Z)-12-oxophyto-10,15-dienoate + NADPH + H(+). It participates in lipid metabolism; oxylipin biosynthesis. Its function is as follows. Specifically cleaves olefinic bonds in alpha,beta-unsaturated carbonyls and may be involved in detoxification or modification of these reactive compounds. May be involved in the biosynthesis or metabolism of oxylipin signaling molecules. In vitro, reduces 9R,13R-12-oxophyodienoic acid (9R,13R-OPDA) to 9R,13R-OPC-8:0, but not 9S,13S-OPDA, the natural precursor of jasmonic acid. Also reduces N-ethylmaleimide and maleic acid. The sequence is that of 12-oxophytodienoate reductase 1 (OPR1) from Solanum lycopersicum (Tomato).